Consider the following 282-residue polypeptide: Fibrinogen-like protein A (282 aa).

The first 24 residues, 1–24 (MFSFIMKAAILLILVGCISFCISS), serve as a signal peptide directing secretion. The Fibrinogen C-terminal domain maps to 61-281 (SHSPEYPRDC…FAEMKLRNRS (221 aa)). 2 disulfide bridges follow: cysteine 70-cysteine 101 and cysteine 224-cysteine 240.

This is Fibrinogen-like protein A from Apostichopus parvimensis (Warty sea cucumber).